The following is a 529-amino-acid chain: Non-reducing end alpha-L-arabinofuranosidase BoGH43B (529 aa).

An N-terminal signal peptide occupies residues 1 to 23 (MMKNSCRLLLILIGLWMANVSLA). Asp-38 acts as the Proton acceptor in catalysis. The Proton donor role is filled by Glu-198.

Belongs to the glycosyl hydrolase 43 family.

Its subcellular location is the periplasm. The enzyme catalyses Hydrolysis of terminal non-reducing alpha-L-arabinofuranoside residues in alpha-L-arabinosides.. Its pathway is glucan metabolism; xyloglucan degradation. In terms of biological role, alpha-L-arabinofuranosidase involved in xyloglucan degradation by mediating the cleavage of terminal non-reducing alpha-L-arabinofuranoside residues in xyloglucan branches, converting the 'S' units to 'X' units. This Bacteroides ovatus (strain ATCC 8483 / DSM 1896 / JCM 5824 / BCRC 10623 / CCUG 4943 / NCTC 11153) protein is Non-reducing end alpha-L-arabinofuranosidase BoGH43B.